The chain runs to 343 residues: CRISPR-associated endonuclease Cas1 1 (343 aa).

The Mn(2+) site is built by Glu166, His234, and Glu249.

It belongs to the CRISPR-associated endonuclease Cas1 family. As to quaternary structure, homodimer, forms a heterotetramer with a Cas2 homodimer. Mg(2+) is required as a cofactor. Requires Mn(2+) as cofactor.

Its function is as follows. CRISPR (clustered regularly interspaced short palindromic repeat), is an adaptive immune system that provides protection against mobile genetic elements (viruses, transposable elements and conjugative plasmids). CRISPR clusters contain spacers, sequences complementary to antecedent mobile elements, and target invading nucleic acids. CRISPR clusters are transcribed and processed into CRISPR RNA (crRNA). Acts as a dsDNA endonuclease. Involved in the integration of spacer DNA into the CRISPR cassette. This Chlorobaculum tepidum (strain ATCC 49652 / DSM 12025 / NBRC 103806 / TLS) (Chlorobium tepidum) protein is CRISPR-associated endonuclease Cas1 1.